A 240-amino-acid polypeptide reads, in one-letter code: Ubiquinone biosynthesis O-methyltransferase (240 aa).

Arginine 44, glycine 64, aspartate 85, and methionine 129 together coordinate S-adenosyl-L-methionine.

The protein belongs to the methyltransferase superfamily. UbiG/COQ3 family.

The catalysed reaction is a 3-demethylubiquinol + S-adenosyl-L-methionine = a ubiquinol + S-adenosyl-L-homocysteine + H(+). The enzyme catalyses a 3-(all-trans-polyprenyl)benzene-1,2-diol + S-adenosyl-L-methionine = a 2-methoxy-6-(all-trans-polyprenyl)phenol + S-adenosyl-L-homocysteine + H(+). It participates in cofactor biosynthesis; ubiquinone biosynthesis. O-methyltransferase that catalyzes the 2 O-methylation steps in the ubiquinone biosynthetic pathway. This chain is Ubiquinone biosynthesis O-methyltransferase, found in Escherichia coli (strain ATCC 8739 / DSM 1576 / NBRC 3972 / NCIMB 8545 / WDCM 00012 / Crooks).